Consider the following 290-residue polypeptide: Shikimate dehydrogenase (NADP(+)) (290 aa).

Residues 22-24 and threonine 68 each bind shikimate; that span reads SLS. Lysine 72 serves as the catalytic Proton acceptor. Shikimate contacts are provided by asparagine 93 and aspartate 108. NADP(+) contacts are provided by residues 133–137 and isoleucine 228; that span reads GSGGS. Tyrosine 230 provides a ligand contact to shikimate. Glycine 251 contributes to the NADP(+) binding site.

This sequence belongs to the shikimate dehydrogenase family. Homodimer.

It catalyses the reaction shikimate + NADP(+) = 3-dehydroshikimate + NADPH + H(+). Its pathway is metabolic intermediate biosynthesis; chorismate biosynthesis; chorismate from D-erythrose 4-phosphate and phosphoenolpyruvate: step 4/7. Involved in the biosynthesis of the chorismate, which leads to the biosynthesis of aromatic amino acids. Catalyzes the reversible NADPH linked reduction of 3-dehydroshikimate (DHSA) to yield shikimate (SA). This chain is Shikimate dehydrogenase (NADP(+)), found in Leptospira borgpetersenii serovar Hardjo-bovis (strain JB197).